The primary structure comprises 420 residues: MKFTNLTAKEFGAFTDSMPYSHFTQTVGHYELKLAEGYETHLVGIKNNNNEVIAACLLTAVPVMKVFKYFYSNRGPVIDYENQELVHFFFNELSKYVKKHRCLYLHIDPYLPYQYLNHDGEITGNAGNDWFFDKMSNLGFEHTGFHKGFDPVLQIRYHSVLDLKDKTADDIIKNMDGLRKRNTKKVKKNGVKVRFLSEEELPIFRSFMEDTSESKAFADRDDKFYYNRLKYYKDRVLVPLAYINFDEYIKELNEERDILNKDLNKALKDIEKRPENKKAHNKRDNLQQQLDANEQKIEEGKRLQEEHGNELPISAGFFFINPFEVVYYAGGTSNAFRHFAGSYAVQWEMINYALNHGIDRYNFYGVSGKFTEDAEDAGVVKFKKGYNAEIIEYVGDFIKPINKPVYAAYTALKKVKDRIF.

Belongs to the FemABX family. As to quaternary structure, homodimer. Interacts with FemB.

It localises to the cytoplasm. It carries out the reaction beta-D-GlcNAc-(1-&gt;4)-Mur2Ac(oyl-L-Ala-D-isoglutaminyl-L-Lys-(N(6)-Gly)-D-Ala-D-Ala)-di-trans,octa-cis-undecaprenyl diphosphate + 2 glycyl-tRNA(Gly) = MurNAc-L-Ala-D-isoglutaminyl-L-Lys-(N(6)-tri-Gly)-D-Ala-D-Ala-diphospho-di-trans,octa-cis-undecaprenyl-GlcNAc + 2 tRNA(Gly) + 2 H(+). Its function is as follows. Catalyzes the formation of the pentaglycine interpeptide bridge, which is characteristic of the S.aureus peptidoglycan. Adds glycines 2 and 3 of the pentaglycine bridge, using glycyl-tRNA(Gly) as donor. Involved in resistance to methicillin. The chain is Aminoacyltransferase FemA (femA) from Staphylococcus aureus (strain NCTC 8325 / PS 47).